A 154-amino-acid polypeptide reads, in one-letter code: Secreted RxLR effector protein PITG_21681 (154 aa).

The first 20 residues, 1-20 (MRRYAALMVIDAVLLSTSQA), serve as a signal peptide directing secretion. The disordered stretch occupies residues 42-70 (SAERDGGIPNKRSLRRISVTESNDGERDE). Positions 53–72 (RSLRRISVTESNDGERDEER) match the RxLR-dEER motif.

Belongs to the RxLR effector family.

The protein localises to the secreted. It localises to the host cell. Its function is as follows. Secreted effector that is involved in host plant infection. Increases the susceptibility to P.infestans and reduces the plant growth. Affects the expression of host genes. The polypeptide is Secreted RxLR effector protein PITG_21681 (Phytophthora infestans (strain T30-4) (Potato late blight agent)).